The chain runs to 187 residues: UPF0301 protein Spro_4027 (187 aa).

The protein belongs to the UPF0301 (AlgH) family.

The protein is UPF0301 protein Spro_4027 of Serratia proteamaculans (strain 568).